A 1257-amino-acid polypeptide reads, in one-letter code: Stromal processing peptidase, chloroplastic (1257 aa).

The transit peptide at 1 to 142 directs the protein to the chloroplast; that stretch reads MAASTSTSSL…ASVKRVQLPH (142 aa). His236 provides a ligand contact to Zn(2+). Glu239 serves as the catalytic Proton acceptor. Residue His240 participates in Zn(2+) binding. Glu309 is an active-site residue. Zn(2+) is bound at residue Glu316. Residues 1233-1257 form a disordered region; the sequence is EEAGEGYPGVLPMGRGLSTMTRPTT.

This sequence belongs to the peptidase M16 family. Requires Zn(2+) as cofactor.

It localises to the plastid. Its subcellular location is the chloroplast stroma. In terms of biological role, cleaves presequences (transit peptides) from chloroplastic protein precursors. Initially recognizes a precursor by binding to the C-terminus of its transit peptide and then removes the transit peptide in a single endoproteolytic step. In a next step, pursues the cleavage of transit peptide to a subfragment form. In Pisum sativum (Garden pea), this protein is Stromal processing peptidase, chloroplastic.